A 346-amino-acid polypeptide reads, in one-letter code: Uricase (346 aa).

A disordered region spans residues 1-23; sequence MFATPLRQPTNASGARPAVSMDG. Catalysis depends on charge relay system residues K39 and T84. Urate is bound by residues T84, D85, F208, R225, V273, Q274, and N300. The active-site Charge relay system is the H302. Positions 344–346 match the Microbody targeting signal motif; it reads SHL.

It belongs to the uricase family. In terms of tissue distribution, malpighian tubules.

It is found in the peroxisome. It carries out the reaction urate + O2 + H2O = 5-hydroxyisourate + H2O2. It functions in the pathway purine metabolism; urate degradation; (S)-allantoin from urate: step 1/3. Its activity is regulated as follows. Repressed by 20-hydroxyecdysone. Functionally, catalyzes the oxidation of uric acid to 5-hydroxyisourate, which is further processed to form (S)-allantoin. The sequence is that of Uricase (Uro) from Drosophila pseudoobscura pseudoobscura (Fruit fly).